Reading from the N-terminus, the 349-residue chain is MRSVLYSYILFLSCIIINGRDIAPHAPSNGKCKDNEYRSRNLCCLSCPPGTYASRLCDSKTNTQCTPCGSDTFTSHNNHLQACLSCNGRCDSNQVETRSCNTTHNRICECSPGYYCLLKGASGCRTCISKTKCGIGYGVSGYTSTGDVICSPCGPGTYSHTVSSTDKCEPVVTSNTFNYIDVEINLYPVNDTSCTRTTTTGLSESISTSELTITMNHKDCDPVFRAEYFSVLNNVATSGFFTGENRYQNTSKICTLNFEIKCNNKDSSSKQLTKTKNDTIMPHSETVTLVGDCLSSVDIYILYSNTNTQDYENDTISYHMGNVLDVNSHMPASCDIHKLITNSQNPTHL.

Positions 1–19 (MRSVLYSYILFLSCIIING) are cleaved as a signal peptide. TNFR-Cys repeat units follow at residues 31–65 (KCKD…NTQC) and 67–108 (PCGS…NRIC). 6 disulfide bridges follow: Cys32/Cys43, Cys44/Cys57, Cys47/Cys65, Cys68/Cys83, Cys86/Cys100, and Cys90/Cys108. Asn101, Asn190, Asn249, Asn277, and Asn313 each carry an N-linked (GlcNAc...) asparagine; by host glycan.

Belongs to the orthopoxvirus OPG002 family.

It is found in the secreted. Its function is as follows. Inhibits host immune defense by binding to host TNF and various chemokines in the extracellular space. Binds host CC chemokines (beta chemokines) and CXC chemokines (alpha chemokines). In Monkeypox virus, this protein is Soluble TNF receptor II (OPG002).